We begin with the raw amino-acid sequence, 415 residues long: Gamma-glutamyl phosphate reductase (415 aa).

This sequence belongs to the gamma-glutamyl phosphate reductase family.

Its subcellular location is the cytoplasm. It carries out the reaction L-glutamate 5-semialdehyde + phosphate + NADP(+) = L-glutamyl 5-phosphate + NADPH + H(+). The protein operates within amino-acid biosynthesis; L-proline biosynthesis; L-glutamate 5-semialdehyde from L-glutamate: step 2/2. Its function is as follows. Catalyzes the NADPH-dependent reduction of L-glutamate 5-phosphate into L-glutamate 5-semialdehyde and phosphate. The product spontaneously undergoes cyclization to form 1-pyrroline-5-carboxylate. This is Gamma-glutamyl phosphate reductase from Bacillus cereus (strain ATCC 10987 / NRS 248).